We begin with the raw amino-acid sequence, 417 residues long: Probable serpin E3 (417 aa).

The signal sequence occupies residues 1-24 (MPQLSASSLFICLWLVDLCHVANS). 5 N-linked (GlcNAc...) asparagine glycosylation sites follow: asparagine 50, asparagine 106, asparagine 140, asparagine 147, and asparagine 152.

This sequence belongs to the serpin family.

Its subcellular location is the secreted. Functionally, probable serine protease inhibitor. The protein is Probable serpin E3 (serpine3) of Danio rerio (Zebrafish).